The sequence spans 273 residues: HMP-PP phosphatase (273 aa).

The active-site Nucleophile is the D8. Mg(2+) is bound by residues D8, D10, and D212.

Belongs to the HAD-like hydrolase superfamily. Cof family. Mg(2+) is required as a cofactor.

The catalysed reaction is 4-amino-2-methyl-5-(diphosphooxymethyl)pyrimidine + H2O = 4-amino-2-methyl-5-(phosphooxymethyl)pyrimidine + phosphate + H(+). In terms of biological role, catalyzes the hydrolysis of 4-amino-2-methyl-5-hydroxymethylpyrimidine pyrophosphate (HMP-PP) to 4-amino-2-methyl-5-hydroxymethylpyrimidine phosphate (HMP-P). The chain is HMP-PP phosphatase from Yersinia enterocolitica serotype O:8 / biotype 1B (strain NCTC 13174 / 8081).